The sequence spans 283 residues: Non-selective voltage-gated ion channel VDAC1 (283 aa).

Ala-2 carries the post-translational modification N-acetylalanine. Lys-12 lines the ATP pocket. A Glycyl lysine isopeptide (Lys-Gly) (interchain with G-Cter in ubiquitin) cross-link involves residue Lys-12. The residue at position 13 (Ser-13) is a Phosphoserine. Position 19 is a phosphothreonine (Thr-19). Lys-20 lines the ATP pocket. Residue Lys-20 is modified to N6-acetyllysine; alternate. Lys-20 carries the N6-succinyllysine; alternate modification. Lys-20 is covalently cross-linked (Glycyl lysine isopeptide (Lys-Gly) (interchain with G-Cter in ubiquitin); alternate). 2 beta stranded membrane-spanning segments follow: residues 26-35 and 39-47; these read LIKLDLKTKS and LEFTSSGSA. Residues Lys-53 and Lys-61 each participate in a glycyl lysine isopeptide (Lys-Gly) (interchain with G-Cter in ubiquitin) cross-link. The beta stranded transmembrane segment at 54-64 threads the bilayer; that stretch reads VTGSLETKYRW. Position 67 is a phosphotyrosine (Tyr-67). The next 3 beta stranded transmembrane spans lie at 69-76, 80-89, and 95-104; these read LTFTEKWN, TLGTEITVED, and LKLTFDSSFS. Thr-107 is subject to Phosphothreonine. At Lys-109 the chain carries N6-acetyllysine; alternate. A Glycyl lysine isopeptide (Lys-Gly) (interchain with G-Cter in ubiquitin); alternate cross-link involves residue Lys-109. A Glycyl lysine isopeptide (Lys-Gly) (interchain with G-Cter in ubiquitin) cross-link involves residue Lys-110. 4 beta stranded membrane-spanning segments follow: residues 111–120, 123–130, 137–145, and 150–158; these read NAKIKTGYKR, VNLGCDVD, SIRGALVLG, and LAGYQMNFE. Lys-161 is covalently cross-linked (Glycyl lysine isopeptide (Lys-Gly) (interchain with G-Cter in ubiquitin)). The next 6 beta stranded transmembrane spans lie at 163 to 175, 178 to 185, 189 to 198, 202 to 211, 218 to 227, and 231 to 238; these read RVTQ…GYKT, FQLHTNVN, EFGGSIYQKV, LETAVNLAWT, RFGIAAKYQI, and ACFSAKVN. The residue at position 193 (Ser-193) is a Phosphoserine; by NEK1. Ser-240 is modified (phosphoserine). 242 to 244 provides a ligand contact to NAD(+); sequence LIG. The chain crosses the membrane as a beta stranded span at residues 242–251; that stretch reads LIGLGYTQTL. Lys-252 is subject to N6-acetyllysine. A beta stranded membrane pass occupies residues 254–263; it reads GIKLTLSALL. 260–264 contacts NAD(+); the sequence is SALLD. An N6-acetyllysine; alternate modification is found at Lys-266. Lys-266 participates in a covalent cross-link: Glycyl lysine isopeptide (Lys-Gly) (interchain with G-Cter in ubiquitin); alternate. A beta stranded transmembrane segment spans residues 273-282; that stretch reads HKLGLGLEFQ. Lys-274 participates in a covalent cross-link: Glycyl lysine isopeptide (Lys-Gly) (interchain with G-Cter in ubiquitin).

It belongs to the eukaryotic mitochondrial porin family. As to quaternary structure, homodimer and homotrimer; in response to cyclic AMP or calcium; oligomerization is required for scramblase activity. Component of the mitochondrial permeability transition pore complex (mPTPC), at least composed of SPG7, VDAC1 and PPIF. Interacts with SPG7, NIPSNAP2 and SLC25A30. Interacts with hexokinases including HK1. The HK1-VDAC1 complex interacts with ATF2. Interacts with BCL2L1. Interacts with BAK1. Interacts with RTL10/BOP (via BH3 domain). Interacts with amyloid-beta and APP; induces VDAC1 dephosphorylation. Interacts with TMEM41B. Interacts with BCAP31. Interacts with HSPA9; this interaction couples ITPR1 to VDAC1. Phosphorylation at Ser-193 by NEK1 promotes the closed conformational state preventing excessive mitochondrial membrane permeability and subsequent apoptotic cell death after injury. Phosphorylation by the AKT-GSK3B axis stabilizes the protein probably by preventing ubiquitin-mediated proteasomal degradation. Post-translationally, ubiquitinated. Undergoes monoubiquitination and polyubiquitination by PRKN; monoubiquitination at Lys-274 inhibits apoptosis, whereas polyubiquitination leads to its degradation and promotes mitophagy. Deubiquitinated by USP30.

The protein localises to the mitochondrion outer membrane. The protein resides in the cell membrane. It is found in the membrane raft. It catalyses the reaction chloride(in) = chloride(out). The catalysed reaction is K(+)(in) = K(+)(out). The enzyme catalyses ATP(in) = ATP(out). It carries out the reaction Ca(2+)(in) = Ca(2+)(out). It catalyses the reaction Na(+)(in) = Na(+)(out). The catalysed reaction is Mg(2+)(in) = Mg(2+)(out). The enzyme catalyses L-glutamate(out) = L-glutamate(in). It carries out the reaction dopamine(out) = dopamine(in). It catalyses the reaction acetylcholine(in) = acetylcholine(out). The catalysed reaction is Fe(III)-[cytochrome c](out) = Fe(III)-[cytochrome c](in). The enzyme catalyses a 1,2-diacyl-sn-glycero-3-phosphocholine(in) = a 1,2-diacyl-sn-glycero-3-phosphocholine(out). It carries out the reaction a 1,2-diacyl-sn-glycero-3-phospho-L-serine(in) = a 1,2-diacyl-sn-glycero-3-phospho-L-serine(out). Its activity is regulated as follows. Inhibited by nitric oxide. Functionally, non-selective voltage-gated ion channel that mediates the transport of anions and cations through the mitochondrion outer membrane and plasma membrane. The channel at the outer mitochondrial membrane allows diffusion of small hydrophilic molecules; in the plasma membrane it is involved in cell volume regulation and apoptosis. It adopts an open conformation at low or zero membrane potential and a closed conformation at potentials above 30-40 mV. The open state has a weak anion selectivity whereas the closed state is cation-selective. Binds various signaling molecules, including the sphingolipid ceramide, the phospholipid phosphatidylcholine, and the sterols cholesterol and oxysterol. In depolarized mitochondria, acts downstream of PRKN and PINK1 to promote mitophagy or prevent apoptosis; polyubiquitination by PRKN promotes mitophagy, while monoubiquitination by PRKN decreases mitochondrial calcium influx which ultimately inhibits apoptosis. May participate in the formation of the permeability transition pore complex (PTPC) responsible for the release of mitochondrial products that triggers apoptosis. May mediate ATP export from cells. Part of a complex composed of HSPA9, ITPR1 and VDAC1 that regulates mitochondrial calcium-dependent apoptosis by facilitating calcium transport from the ER lumen to the mitochondria intermembrane space thus providing calcium for the downstream calcium channel MCU that directly releases it into mitochondria matrix. Mediates cytochrome c efflux. In terms of biological role, catalyzes the scrambling of phospholipids across the outer mitochondrial membrane; the mechanism is unrelated to channel activity and is capable of translocating both anionic and zwitterionic phospholipids. The chain is Non-selective voltage-gated ion channel VDAC1 from Sus scrofa (Pig).